We begin with the raw amino-acid sequence, 149 residues long: Large ribosomal subunit protein uL15A (149 aa).

The disordered stretch occupies residues 21–40 (RIGKHRKQRGGRGNAGGQHH).

This sequence belongs to the universal ribosomal protein uL15 family. In terms of assembly, component of the large ribosomal subunit.

The protein resides in the cytoplasm. Its subcellular location is the cytosol. It is found in the endoplasmic reticulum. Functionally, component of the large ribosomal subunit. The ribosome is a large ribonucleoprotein complex responsible for the synthesis of proteins in the cell. This is Large ribosomal subunit protein uL15A (rpl27a-1) from Entamoeba histolytica (strain ATCC 30459 / HM-1:IMSS / ABRM).